The sequence spans 121 residues: Large ribosomal subunit protein uL18c (121 aa).

The protein belongs to the universal ribosomal protein uL18 family. In terms of assembly, part of the 50S ribosomal subunit; contacts the 5S rRNA.

It is found in the plastid. The protein localises to the cyanelle. Functionally, binds 5S rRNA, forms part of the central protuberance of the 50S subunit. The protein is Large ribosomal subunit protein uL18c (rpl18) of Cyanophora paradoxa.